Reading from the N-terminus, the 463-residue chain is Probable diacyglycerol O-acyltransferase tgs1 (463 aa).

H137 acts as the Proton acceptor in catalysis.

The protein belongs to the long-chain O-acyltransferase family.

The enzyme catalyses an acyl-CoA + a 1,2-diacyl-sn-glycerol = a triacyl-sn-glycerol + CoA. It participates in glycerolipid metabolism; triacylglycerol biosynthesis. Catalyzes the terminal and only committed step in triacylglycerol synthesis by using diacylglycerol and fatty acyl CoA as substrates. Required for storage lipid synthesis. This chain is Probable diacyglycerol O-acyltransferase tgs1 (tgs1), found in Mycobacterium tuberculosis (strain CDC 1551 / Oshkosh).